Consider the following 224-residue polypeptide: Metalloproteinase inhibitor 4 (224 aa).

The first 29 residues, 1 to 29 (MPGSPRPAPSWVLLLRLLALLRPPGLGEA), serve as a signal peptide directing secretion. Residue Cys30 coordinates Zn(2+). 2 involved in metalloproteinase-binding regions span residues 30–33 (CSCA) and 99–100 (SS). 6 disulfide bridges follow: Cys30–Cys102, Cys32–Cys131, Cys42–Cys156, Cys158–Cys205, Cys163–Cys168, and Cys176–Cys197. Residues 30–156 (CSCAPAHPQQ…SLNHHYHLNC (127 aa)) form the NTR domain.

The protein belongs to the protease inhibitor I35 (TIMP) family. As to expression, abundant in heart and present at low levels in many other tissues.

The protein localises to the secreted. Complexes with metalloproteinases (such as collagenases) and irreversibly inactivates them by binding to their catalytic zinc cofactor. Known to act on MMP-1, MMP-2, MMP-3, MMP-7 and MMP-9. The sequence is that of Metalloproteinase inhibitor 4 (TIMP4) from Homo sapiens (Human).